A 765-amino-acid chain; its full sequence is ATP-dependent zinc metalloprotease FtsH (765 aa).

The Cytoplasmic segment spans residues 1–27 (MSNTSNFNERVTENAKPPKNVKSIIWK). Residues 28-48 (TIGIIIVMAIIIGLILFYVLP) form a helical membrane-spanning segment. The Extracellular segment spans residues 49–213 (RNTIANISNI…NVQLPNQSTA (165 aa)). The chain crosses the membrane as a helical span at residues 214-234 (ILTQFLTSIIPFVILIVIYIV). At 235-765 (IARRFSRTMG…EPTASTASSN (531 aa)) the chain is on the cytoplasmic side. ATP is bound at residue 314-321 (GPPGTGKT). Position 536 (histidine 536) interacts with Zn(2+). Glutamate 537 is a catalytic residue. Residues histidine 540 and aspartate 615 each coordinate Zn(2+). The segment covering 730-748 (KAAAEKEEQAEKAKLDHQS) has biased composition (basic and acidic residues). The interval 730–765 (KAAAEKEEQAEKAKLDHQSDSAQPQEEPTASTASSN) is disordered. Residues 749–765 (DSAQPQEEPTASTASSN) show a composition bias toward polar residues.

It in the central section; belongs to the AAA ATPase family. In the C-terminal section; belongs to the peptidase M41 family. Homohexamer. Zn(2+) is required as a cofactor.

It is found in the cell membrane. Acts as a processive, ATP-dependent zinc metallopeptidase for both cytoplasmic and membrane proteins. Plays a role in the quality control of integral membrane proteins. This Mycoplasmoides gallisepticum (strain R(high / passage 156)) (Mycoplasma gallisepticum) protein is ATP-dependent zinc metalloprotease FtsH.